Consider the following 707-residue polypeptide: SEC14-like protein 5 (707 aa).

One can recognise a PRELI/MSF1 domain in the interval 3 to 175; that stretch reads QKYQSPVRVY…YLNELISQGI (173 aa). Over residues 201–211 the composition is skewed to polar residues; it reads RSNQAEQTASQ. Residues 201 to 232 form a disordered region; sequence RSNQAEQTASQGPCKADAGSHSLAAEPSTPDT. Residues 315–491 form the CRAL-TRIO domain; that stretch reads PPRVLEEYYA…FLGGECVCNI (177 aa). Residues 518–667 form the GOLD domain; sequence TETIYQSSCV…KCKLMYYFEV (150 aa). A compositionally biased stretch (polar residues) spans 686–695; the sequence is FSQLSGVTNT. The segment at 686 to 707 is disordered; that stretch reads FSQLSGVTNTSSKSHSSSLISR. The segment covering 696–707 has biased composition (low complexity); the sequence is SSKSHSSSLISR.

The chain is SEC14-like protein 5 (sec14l1) from Xenopus tropicalis (Western clawed frog).